Reading from the N-terminus, the 78-residue chain is DNA-directed RNA polymerase subunit Rpo5 (78 aa).

The protein belongs to the archaeal Rpo5/eukaryotic RPB5 RNA polymerase subunit family. As to quaternary structure, part of the RNA polymerase complex.

It localises to the cytoplasm. The catalysed reaction is RNA(n) + a ribonucleoside 5'-triphosphate = RNA(n+1) + diphosphate. In terms of biological role, DNA-dependent RNA polymerase (RNAP) catalyzes the transcription of DNA into RNA using the four ribonucleoside triphosphates as substrates. In Methanosarcina acetivorans (strain ATCC 35395 / DSM 2834 / JCM 12185 / C2A), this protein is DNA-directed RNA polymerase subunit Rpo5.